Consider the following 487-residue polypeptide: Glucose starvation modulator protein 1 (487 aa).

The disordered stretch occupies residues 1-75 (MSIRFPEIPG…KRLTPQEKKA (75 aa)). The span at 59 to 68 (SFSSSMTKRL) shows a compositional bias: polar residues. A DNA-binding region (zn(2)-C6 fungal-type) is located at residues 83–111 (CVFCHSKHLQCSHSRPCQNCIKRNLAHEC). The segment covering 122 to 139 (MSTTEVPAVSGESSSESG) has biased composition (polar residues). The segment at 122–158 (MSTTEVPAVSGESSSESGRATGENGSEMGNPPDPQIA) is disordered. Residues 348–420 (CLLDYENLSR…FRLFESVAVG (73 aa)) form the PAS domain.

It belongs to the ERT1/acuK family.

It localises to the nucleus. Functionally, transcription factor which regulates nonfermentable carbon utilization. This is Glucose starvation modulator protein 1 (GSM1) from Clavispora lusitaniae (strain ATCC 42720) (Yeast).